The following is a 184-amino-acid chain: Lipoprotein signal peptidase (184 aa).

Helical transmembrane passes span 23 to 43 (FLYY…FQVF), 88 to 108 (PGLV…FLVF), and 110 to 130 (TSYN…GNFF). Active-site residues include D142 and D157. The helical transmembrane segment at 156-176 (ADCCITFSFIGLFLSFLIQFF) threads the bilayer.

Belongs to the peptidase A8 family.

The protein resides in the cell membrane. The catalysed reaction is Release of signal peptides from bacterial membrane prolipoproteins. Hydrolyzes -Xaa-Yaa-Zaa-|-(S,diacylglyceryl)Cys-, in which Xaa is hydrophobic (preferably Leu), and Yaa (Ala or Ser) and Zaa (Gly or Ala) have small, neutral side chains.. The protein operates within protein modification; lipoprotein biosynthesis (signal peptide cleavage). This protein specifically catalyzes the removal of signal peptides from prolipoproteins. The protein is Lipoprotein signal peptidase of Mycoplasma pneumoniae (strain ATCC 29342 / M129 / Subtype 1) (Mycoplasmoides pneumoniae).